A 75-amino-acid polypeptide reads, in one-letter code: DNA-directed RNA polymerase subunit omega (75 aa).

It belongs to the RNA polymerase subunit omega family. In terms of assembly, in cyanobacteria the RNAP catalytic core is composed of 2 alpha, 1 beta, 1 beta', 1 gamma and 1 omega subunit. When a sigma factor is associated with the core the holoenzyme is formed, which can initiate transcription.

It carries out the reaction RNA(n) + a ribonucleoside 5'-triphosphate = RNA(n+1) + diphosphate. Functionally, promotes RNA polymerase assembly. Latches the N- and C-terminal regions of the beta' subunit thereby facilitating its interaction with the beta and alpha subunits. In Cyanothece sp. (strain PCC 7425 / ATCC 29141), this protein is DNA-directed RNA polymerase subunit omega.